The sequence spans 92 residues: Arrestin-C (92 aa).

It belongs to the arrestin family. Homodimer; disulfide-linked in response to retinal illumination. Interacts with CXCR4; the interaction is dependent on the C-terminal phosphorylation of CXCR4 and modulates the calcium ion mobilization activity of CXCR4. Interacts with GPR84. In terms of tissue distribution, retina and pineal gland.

The protein localises to the photoreceptor inner segment. It localises to the cell projection. The protein resides in the cilium. Its subcellular location is the photoreceptor outer segment. In terms of biological role, may play a role in an as yet undefined retina-specific signal transduction. Could bind to photoactivated-phosphorylated red/green opsins. This Rattus norvegicus (Rat) protein is Arrestin-C (Arr3).